Consider the following 433-residue polypeptide: Enolase (433 aa).

(2R)-2-phosphoglycerate is bound at residue Gln163. Glu205 serves as the catalytic Proton donor. The Mg(2+) site is built by Asp242, Glu286, and Asp313. 4 residues coordinate (2R)-2-phosphoglycerate: Lys338, Arg367, Ser368, and Lys389. Lys338 acts as the Proton acceptor in catalysis.

This sequence belongs to the enolase family. Mg(2+) serves as cofactor.

The protein localises to the cytoplasm. It localises to the secreted. It is found in the cell surface. The enzyme catalyses (2R)-2-phosphoglycerate = phosphoenolpyruvate + H2O. It functions in the pathway carbohydrate degradation; glycolysis; pyruvate from D-glyceraldehyde 3-phosphate: step 4/5. Catalyzes the reversible conversion of 2-phosphoglycerate (2-PG) into phosphoenolpyruvate (PEP). It is essential for the degradation of carbohydrates via glycolysis. The polypeptide is Enolase (Koribacter versatilis (strain Ellin345)).